The chain runs to 130 residues: UPF0251 protein Mevan_1492 (130 aa).

The protein belongs to the UPF0251 family.

In Methanococcus vannielii (strain ATCC 35089 / DSM 1224 / JCM 13029 / OCM 148 / SB), this protein is UPF0251 protein Mevan_1492.